The chain runs to 298 residues: MKDFISIRDFDRAAIDRLIAEAERIDHHQYDPLEMKGKILALLFFEPSTRTRMSFEAAMARLGGTSLTLSSFEASSMAKGETLADTIRVVSGYVDAIVLRHPREGAARLASEVSSVPVINAGDGAGQHPSQTLLDLYTIRQSMPIDGINIGLLGDLRYGRTTHSLTYALSLYDAVIHTVAPAGLNLPSGLVHELRELGTEVIEHEQIEDVIKELDVLYVTRIQRERFPDTASYFNVASSYRITPELLRGTKEHMVVLHPLPRVDEIDPRVDKMKNARYFEQSHNGVPVRMAMLKQVIA.

Residues arginine 50 and threonine 51 each coordinate carbamoyl phosphate. Residue lysine 79 participates in L-aspartate binding. The carbamoyl phosphate site is built by arginine 100, histidine 128, and glutamine 131. Residues arginine 160 and arginine 221 each coordinate L-aspartate. Residues leucine 260 and proline 261 each contribute to the carbamoyl phosphate site.

It belongs to the aspartate/ornithine carbamoyltransferase superfamily. ATCase family. As to quaternary structure, heterooligomer of catalytic and regulatory chains.

It catalyses the reaction carbamoyl phosphate + L-aspartate = N-carbamoyl-L-aspartate + phosphate + H(+). The protein operates within pyrimidine metabolism; UMP biosynthesis via de novo pathway; (S)-dihydroorotate from bicarbonate: step 2/3. Functionally, catalyzes the condensation of carbamoyl phosphate and aspartate to form carbamoyl aspartate and inorganic phosphate, the committed step in the de novo pyrimidine nucleotide biosynthesis pathway. This is Aspartate carbamoyltransferase catalytic subunit from Methanosphaerula palustris (strain ATCC BAA-1556 / DSM 19958 / E1-9c).